Consider the following 621-residue polypeptide: MNYDVIVVGGGHAGIEASLAAAKMGAKTLLITILAEQIGAASCNPAIGGLAKGHLVKEIDALGGQMGLTTDACGIQFRLLNESKGPAVRGSRAQIDMDRYRVYMRNLLLNTPNLEVTQEIATEILTKDNNIIGVKTHLDNNYGTKKLIITTGTFLNGLIHVGFNKLEAGRVGELSSKSLSASLKSLNLEMGRLKTGTCPRVLAKSIDFSVLERQDGDQDPTPFSFRTKEFNKTQLPCYIAYTNEKTHEIIRSNFDRAPLFTGQIEGIGPRYCPSIEDKINRFGDRERHHLFIEPQTREATEYYINGFSTSLPYDAQVEMLRSVKGFQNAKIVRHGYAIEYDYVSPTELKHTLETKKINGLYLAGQINGTTGYEEAAAQGLMAGINAALNLKTREPLILRRDESYIGVLIDDLVTKGTKEPYRMFTSRAEYRLLLREDNANLRLSKYGYNVGLLPKEAFEEMLKLKSNLEKGMEILLTKDMSPNKENLEFLASIDEDIINEKVPLQKIAARKSFTIEKLRKLNEFFLNLDDKSLNQILTEAKYYHYIAQQQIEVEKMKGLLDIKIPKSLEFKSISGLSNEVVEKLNKFAPPTLAAASNISGITPVAIDILHIAIKYHCQKTK.

9 to 14 (GGGHAG) lines the FAD pocket. 268–282 (GPRYCPSIEDKINRF) is an NAD(+) binding site.

This sequence belongs to the MnmG family. Homodimer. Heterotetramer of two MnmE and two MnmG subunits. It depends on FAD as a cofactor.

Its subcellular location is the cytoplasm. Its function is as follows. NAD-binding protein involved in the addition of a carboxymethylaminomethyl (cmnm) group at the wobble position (U34) of certain tRNAs, forming tRNA-cmnm(5)s(2)U34. The protein is tRNA uridine 5-carboxymethylaminomethyl modification enzyme MnmG of Campylobacter fetus subsp. fetus (strain 82-40).